The primary structure comprises 60 residues: Large ribosomal subunit protein bL32 (60 aa).

Residues 1–23 (MAVPKRKKSKSRRNMHRSHHAIK) are disordered.

Belongs to the bacterial ribosomal protein bL32 family.

This chain is Large ribosomal subunit protein bL32, found in Wolbachia pipientis subsp. Culex pipiens (strain wPip).